Consider the following 271-residue polypeptide: Short-chain dehydrogenase/reductase SAT3 (271 aa).

Residues Ser-17, Asp-40, and Asn-67 each contribute to the NADP(+) site. Ser-153 acts as the Proton donor in catalysis. Residues Tyr-168, Lys-172, and Ser-203 each contribute to the NADP(+) site. The Proton acceptor role is filled by Tyr-168. Lys-172 functions as the Lowers pKa of active site Tyr in the catalytic mechanism.

It belongs to the short-chain dehydrogenases/reductases (SDR) family.

It functions in the pathway mycotoxin biosynthesis. Short-chain dehydrogenase/reductase; part of the satratoxin SC1 cluster involved in the biosynthesis of satratoxins, trichothecene mycotoxins that are associated with human food poisonings. Satratoxins are suggested to be made by products of multiple gene clusters (SC1, SC2 and SC3) that encode 21 proteins in all, including polyketide synthases, acetyltransferases, and other enzymes expected to modify the trichothecene skeleton. SC1 encodes 10 proteins, SAT1 to SAT10. The largest are SAT8, which encodes a putative polyketide synthase (PKS) with a conventional non-reducing architecture, and SAT10, a putative protein containing four ankyrin repeats and thus may be involved in protein scaffolding. The putative short-chain reductase SAT3 may assist the PKS in some capacity. SAT6 contains a secretory lipase domain and acts probably as a trichothecene esterase. SAT5 encodes a putative acetyltransferase, and so, with SAT6, may affect endogenous protection from toxicity. The probable transcription factor SAT9 may regulate the expression of the SC1 cluster. SC2 encodes proteins SAT11 to SAT16, the largest of which encodes the putative reducing PKS SAT13. SAT11 is a cytochrome P450 monooxygenase, while SAT14 and SAT16 are probable acetyltransferases. The SC2 cluster may be regulated by the transcription factor SAT15. SC3 is a small cluster that encodes 5 proteins, SAT17 to SAT21. SAT21 is a putative MFS-type transporter which may have a role in exporting secondary metabolites. The four other proteins putatively encoded in SC3 include the taurine hydroxylase-like protein SAT17, the O-methyltransferase SAT18, the acetyltransferase SAT19, and the Cys6-type zinc finger SAT20, the latter being probably involved in regulation of SC3 expression. This is Short-chain dehydrogenase/reductase SAT3 from Stachybotrys chartarum (strain CBS 109288 / IBT 7711) (Toxic black mold).